The chain runs to 158 residues: Ribonuclease H (158 aa).

Positions 1-147 constitute an RNase H type-1 domain; it reads MKVTIYTDGA…CDVLATTAAD (147 aa). 4 residues coordinate Mg(2+): Asp8, Glu52, Asp74, and Asp139.

It belongs to the RNase H family. In terms of assembly, monomer. Mg(2+) is required as a cofactor.

Its subcellular location is the cytoplasm. It catalyses the reaction Endonucleolytic cleavage to 5'-phosphomonoester.. In terms of biological role, endonuclease that specifically degrades the RNA of RNA-DNA hybrids. In Lachnoclostridium phytofermentans (strain ATCC 700394 / DSM 18823 / ISDg) (Clostridium phytofermentans), this protein is Ribonuclease H.